A 464-amino-acid chain; its full sequence is UDP-N-acetylmuramate--L-alanine ligase (464 aa).

Residue 111-117 (GAHGKTT) participates in ATP binding.

Belongs to the MurCDEF family.

Its subcellular location is the cytoplasm. The enzyme catalyses UDP-N-acetyl-alpha-D-muramate + L-alanine + ATP = UDP-N-acetyl-alpha-D-muramoyl-L-alanine + ADP + phosphate + H(+). It functions in the pathway cell wall biogenesis; peptidoglycan biosynthesis. Functionally, cell wall formation. The polypeptide is UDP-N-acetylmuramate--L-alanine ligase (Dictyoglomus turgidum (strain DSM 6724 / Z-1310)).